Reading from the N-terminus, the 827-residue chain is MAASAVAVAFVVAVAAVLAAAASAAVTYDRKAVVVNGQRRILISGSIHYPRSTPEMWPDLIEKAKDGGLDVVQTYVFWNGHEPSPGQYYFEGRYDLVHFIKLVKQAGLYVNLRIGPYVCAEWNFGGFPVWLKYVPGISFRTDNEPFKAEMQKFTTKIVEMMKSEGLFEWQGGPIILSQIENEFGPLEWDQGEPAKAYASWAANMAVALNTSVPWIMCKEDDAPDPIINTCNGFYCDWFSPNKPHKPTMWTEAWTAWYTGFGIPVPHRPVEDLAYGVAKFIQKGGSFVNYYMYHGGTNFGRTAGGPFIATSYDYDAPIDEYGLLREPKWGHLKQLHKAIKLCEPALVAGDPIVTSLGNAQKSSVFRSSTGACAAFLENKDKVSYARVAFNGMHYDLPPWSISILPDCKTTVFNTARVGSQISQMKMEWAGGFAWQSYNEEINSFGEDPLTTVGLLEQINVTRDNTDYLWYTTYVDVAQDEQFLSNGENLKLTVMSAGHALHIFINGQLKGTVYGSVDDPKLTYTGNVKLWAGSNTISCLSIAVGLPNVGEHFETWNAGILGPVTLDGLNEGRRDLTWQKWTYQVGLKGESMSLHSLSGSSTVEWGEPVQKQPLTWYKAFFNAPDGDEPLALDMSSMGKGQIWINGQGIGRYWPGYKASGNCGTCDYRGEYDETKCQTNCGDSSQRWYHVPRSWLSPTGNLLVIFEEWGGDPTGISMVKRSIGSVCADVSEWQPSMKNWHTKDYEKAKVHLQCDNGQKITEIKFASFGTPQGSCGSYTEGGCHAHKSYDIFWKNCVGQERCGVSVVPEIFGGDPCPGTMKRAVVEAICG.

Residues 1-24 (MAASAVAVAFVVAVAAVLAAAASA) form the signal peptide. Glutamate 182 acts as the Proton donor in catalysis. A glycan (N-linked (GlcNAc...) asparagine) is linked at asparagine 209. The active-site Nucleophile is the glutamate 251. N-linked (GlcNAc...) asparagine glycosylation occurs at asparagine 458. In terms of domain architecture, SUEL-type lectin spans 741 to 827 (DYEKAKVHLQ…KRAVVEAICG (87 aa)).

It belongs to the glycosyl hydrolase 35 family.

It localises to the secreted. The protein resides in the extracellular space. It is found in the apoplast. The catalysed reaction is Hydrolysis of terminal non-reducing beta-D-galactose residues in beta-D-galactosides.. In Oryza sativa subsp. japonica (Rice), this protein is Beta-galactosidase 2.